The following is a 589-amino-acid chain: Aspartate--tRNA ligase (589 aa).

L-aspartate is bound at residue glutamate 175. Positions 199 to 202 are aspartate; sequence QLFK. Residue arginine 221 coordinates L-aspartate. Residues 221–223 and glutamine 230 contribute to the ATP site; that span reads RDE. Position 449 (histidine 449) interacts with L-aspartate. ATP is bound at residue glutamate 483. L-aspartate is bound at residue arginine 490. 535 to 538 contributes to the ATP binding site; it reads GLDR.

It belongs to the class-II aminoacyl-tRNA synthetase family. Type 1 subfamily. In terms of assembly, homodimer.

It localises to the cytoplasm. The enzyme catalyses tRNA(Asp) + L-aspartate + ATP = L-aspartyl-tRNA(Asp) + AMP + diphosphate. Its function is as follows. Catalyzes the attachment of L-aspartate to tRNA(Asp) in a two-step reaction: L-aspartate is first activated by ATP to form Asp-AMP and then transferred to the acceptor end of tRNA(Asp). This Lysinibacillus sphaericus (strain C3-41) protein is Aspartate--tRNA ligase.